A 297-amino-acid polypeptide reads, in one-letter code: Acetylglutamate kinase (297 aa).

Residues Gly72 to Gly73, Arg94, and Asn193 each bind substrate.

The protein belongs to the acetylglutamate kinase family. ArgB subfamily.

Its subcellular location is the cytoplasm. The catalysed reaction is N-acetyl-L-glutamate + ATP = N-acetyl-L-glutamyl 5-phosphate + ADP. It functions in the pathway amino-acid biosynthesis; L-arginine biosynthesis; N(2)-acetyl-L-ornithine from L-glutamate: step 2/4. Functionally, catalyzes the ATP-dependent phosphorylation of N-acetyl-L-glutamate. The protein is Acetylglutamate kinase of Mycobacterium leprae (strain TN).